Reading from the N-terminus, the 198-residue chain is Molybdenum cofactor guanylyltransferase (198 aa).

Residues 14–16 (LAG), Lys-27, Asp-73, and Asp-103 each bind GTP. Mg(2+) is bound at residue Asp-103.

Belongs to the MobA family. Monomer. Mg(2+) serves as cofactor.

It localises to the cytoplasm. It catalyses the reaction Mo-molybdopterin + GTP + H(+) = Mo-molybdopterin guanine dinucleotide + diphosphate. Its function is as follows. Transfers a GMP moiety from GTP to Mo-molybdopterin (Mo-MPT) cofactor (Moco or molybdenum cofactor) to form Mo-molybdopterin guanine dinucleotide (Mo-MGD) cofactor. This is Molybdenum cofactor guanylyltransferase from Pseudomonas aeruginosa (strain LESB58).